Reading from the N-terminus, the 187-residue chain is GTP cyclohydrolase 1 (187 aa).

Residues Cys81, His84, and Cys152 each coordinate Zn(2+).

It belongs to the GTP cyclohydrolase I family. As to quaternary structure, homomer.

The catalysed reaction is GTP + H2O = 7,8-dihydroneopterin 3'-triphosphate + formate + H(+). Its pathway is cofactor biosynthesis; 7,8-dihydroneopterin triphosphate biosynthesis; 7,8-dihydroneopterin triphosphate from GTP: step 1/1. The protein is GTP cyclohydrolase 1 of Pyrobaculum neutrophilum (strain DSM 2338 / JCM 9278 / NBRC 100436 / V24Sta) (Thermoproteus neutrophilus).